The primary structure comprises 131 residues: Small ribosomal subunit protein uS12 (131 aa).

Asp89 carries the 3-methylthioaspartic acid modification.

It belongs to the universal ribosomal protein uS12 family. As to quaternary structure, part of the 30S ribosomal subunit. Contacts proteins S8 and S17. May interact with IF1 in the 30S initiation complex.

In terms of biological role, with S4 and S5 plays an important role in translational accuracy. Interacts with and stabilizes bases of the 16S rRNA that are involved in tRNA selection in the A site and with the mRNA backbone. Located at the interface of the 30S and 50S subunits, it traverses the body of the 30S subunit contacting proteins on the other side and probably holding the rRNA structure together. The combined cluster of proteins S8, S12 and S17 appears to hold together the shoulder and platform of the 30S subunit. The polypeptide is Small ribosomal subunit protein uS12 (Campylobacter concisus (strain 13826)).